The following is a 522-amino-acid chain: MTDFAARLKQVASNPEVFKQFGRGVERETLRYRQDGHLATTPHPEGLGSAFTNKWITTDFSESLLEFITPVSHEIPELMGQLKDIHHFTQTKMGEEKMWPLSMPCYVGSEDDIQLAQYGSSNSAKMKTLYREGLKRRYGSLMQIISGVHFNFSFPESFWDALHGEQDEEARQDTKSDAYFALIRNYYRFGWMIPYFFGASPALCGSFIQGRETDLPFEKIGGTLFLPKATSLRLSDLGYTNSAQSVLKIGFNSIDQYLDGLSDAIRRPSEEFAEIGVKVDGEYRQLNSNILQIENELYAPIRPKRVTKSGEKPSEALQRGGVEYIEVRSLDVNPFSAVGVSEEQVRFLDLFLTWAALSDSDPMDNCELECWRDNWNKVIVSGREKGLMLQIGCQGERLSLQDWAHRVFADLRQIAVEMDSAAGGNAYQAVCDKLESWIDEPELTISGQLLELTKEHGGLGKVGCALGMKFREENLAHSYEQYSADAMETEVATSLEKQKQAEQSDTLSFDDFLEDYFAYLKQ.

Belongs to the glutamate--cysteine ligase type 1 family. Type 1 subfamily.

It carries out the reaction L-cysteine + L-glutamate + ATP = gamma-L-glutamyl-L-cysteine + ADP + phosphate + H(+). It participates in sulfur metabolism; glutathione biosynthesis; glutathione from L-cysteine and L-glutamate: step 1/2. In Vibrio campbellii (strain ATCC BAA-1116), this protein is Glutamate--cysteine ligase.